The sequence spans 379 residues: Lipoyl synthase 2, mitochondrial (379 aa).

[4Fe-4S] cluster contacts are provided by Cys106, Cys111, Cys117, Cys137, Cys141, Cys144, and Ser352. Residues 122–341 (EHGTQTATIM…EERGNELGFL (220 aa)) form the Radical SAM core domain.

It belongs to the radical SAM superfamily. Lipoyl synthase family. The cofactor is [4Fe-4S] cluster.

Its subcellular location is the mitochondrion. It catalyses the reaction [[Fe-S] cluster scaffold protein carrying a second [4Fe-4S](2+) cluster] + N(6)-octanoyl-L-lysyl-[protein] + 2 oxidized [2Fe-2S]-[ferredoxin] + 2 S-adenosyl-L-methionine + 4 H(+) = [[Fe-S] cluster scaffold protein] + N(6)-[(R)-dihydrolipoyl]-L-lysyl-[protein] + 4 Fe(3+) + 2 hydrogen sulfide + 2 5'-deoxyadenosine + 2 L-methionine + 2 reduced [2Fe-2S]-[ferredoxin]. Its pathway is protein modification; protein lipoylation via endogenous pathway; protein N(6)-(lipoyl)lysine from octanoyl-[acyl-carrier-protein]: step 2/2. Its function is as follows. Catalyzes the radical-mediated insertion of two sulfur atoms into the C-6 and C-8 positions of the octanoyl moiety bound to the lipoyl domains of lipoate-dependent enzymes, thereby converting the octanoylated domains into lipoylated derivatives. This is Lipoyl synthase 2, mitochondrial from Drosophila yakuba (Fruit fly).